We begin with the raw amino-acid sequence, 87 residues long: UPF0250 protein Ent638_1166 (87 aa).

It belongs to the UPF0250 family.

The chain is UPF0250 protein Ent638_1166 from Enterobacter sp. (strain 638).